The primary structure comprises 347 residues: Heat-inducible transcription repressor HrcA (347 aa).

It belongs to the HrcA family.

Functionally, negative regulator of class I heat shock genes (grpE-dnaK-dnaJ and groELS operons). Prevents heat-shock induction of these operons. The sequence is that of Heat-inducible transcription repressor HrcA from Lactiplantibacillus plantarum (strain ATCC BAA-793 / NCIMB 8826 / WCFS1) (Lactobacillus plantarum).